We begin with the raw amino-acid sequence, 299 residues long: Aliphatic sulfonates import ATP-binding protein SsuB (299 aa).

Residues 36–257 (LHVQQVIKRY…QHGSAAFAQI (222 aa)) enclose the ABC transporter domain. Position 68 to 75 (68 to 75 (GRSGCGKS)) interacts with ATP.

It belongs to the ABC transporter superfamily. Aliphatic sulfonates importer (TC 3.A.1.17.2) family. As to quaternary structure, the complex is composed of two ATP-binding proteins (SsuB), two transmembrane proteins (SsuC) and a solute-binding protein (SsuA).

The protein localises to the cell inner membrane. It catalyses the reaction ATP + H2O + aliphatic sulfonate-[sulfonate-binding protein]Side 1 = ADP + phosphate + aliphatic sulfonateSide 2 + [sulfonate-binding protein]Side 1.. In terms of biological role, part of the ABC transporter complex SsuABC involved in aliphatic sulfonates import. Responsible for energy coupling to the transport system. The chain is Aliphatic sulfonates import ATP-binding protein SsuB from Cupriavidus pinatubonensis (strain JMP 134 / LMG 1197) (Cupriavidus necator (strain JMP 134)).